Here is a 101-residue protein sequence, read N- to C-terminus: Small ribosomal subunit protein uS10 (101 aa).

This sequence belongs to the universal ribosomal protein uS10 family. Part of the 30S ribosomal subunit.

Functionally, involved in the binding of tRNA to the ribosomes. This chain is Small ribosomal subunit protein uS10, found in Flavobacterium psychrophilum (strain ATCC 49511 / DSM 21280 / CIP 103535 / JIP02/86).